The primary structure comprises 466 residues: DNA repair protein RadA (466 aa).

The C4-type zinc-finger motif lies at 12 to 29 (CSECQHVAPKWVGRCANC). Residue 100-107 (GDPGVGKS) participates in ATP binding. Residues 261–265 (KNRFG) carry the RadA KNRFG motif motif. Residues 359–466 (DLYLSTVGGM…MREIAIAGAQ (108 aa)) form a lon-protease-like region.

The protein belongs to the RecA family. RadA subfamily. As to quaternary structure, interacts with DisA.

Functionally, DNA-dependent ATPase involved in processing of recombination intermediates, plays a role in repairing DNA breaks. Stimulates the branch migration of RecA-mediated strand transfer reactions, allowing the 3' invading strand to extend heteroduplex DNA faster. Binds ssDNA in the presence of ADP but not other nucleotides, has ATPase activity that is stimulated by ssDNA and various branched DNA structures, but inhibited by SSB. Does not have RecA's homology-searching function. Also inhibits the diadenylate cyclase activity of DisA. The protein is DNA repair protein RadA of Mycolicibacterium smegmatis (strain ATCC 700084 / mc(2)155) (Mycobacterium smegmatis).